Here is a 374-residue protein sequence, read N- to C-terminus: Gibberellin 3-beta-dioxygenase 1 (374 aa).

In terms of domain architecture, Fe2OG dioxygenase spans 206–307 (KACAALQLNS…RFSVAYLYGP (102 aa)). Residues His231, Asp233, and His288 each contribute to the Fe cation site. The active site involves Arg298. Position 298 (Arg298) interacts with 2-oxoglutarate.

Belongs to the iron/ascorbate-dependent oxidoreductase family. GA3OX subfamily. The cofactor is L-ascorbate. Requires Fe(2+) as cofactor. Expressed in radicles, roots, internodes, cotyledons, leaves and shoots. Barely detected in developing seeds. Not detected in flowers or young fruits.

It catalyses the reaction gibberellin A20 + 2-oxoglutarate + O2 = gibberellin A1 + succinate + CO2. It participates in plant hormone biosynthesis; gibberellin biosynthesis. In terms of biological role, converts the inactive gibberellin (GA) precursors GA9 and GA20 in the bioactives gibberellins GA4 and GA1. Has a small activity on GA29, producing GA8. Unable to convert GA20 to GA5, GA5 to GA3 or GA12 to GA14. Involved in the production of bioactive GA for vegetative growth and development, but not for the 3-beta-hydroxylation of GA in developing seeds. The protein is Gibberellin 3-beta-dioxygenase 1 (LE) of Pisum sativum (Garden pea).